The primary structure comprises 328 residues: Pyruvate dehydrogenase E1 component subunit beta (328 aa).

E60 is a thiamine diphosphate binding site. Residues I113, I162, and N166 each coordinate K(+).

Heterodimer of an alpha and a beta chain. Requires thiamine diphosphate as cofactor.

Its subcellular location is the plastid. It is found in the chloroplast. It catalyses the reaction N(6)-[(R)-lipoyl]-L-lysyl-[protein] + pyruvate + H(+) = N(6)-[(R)-S(8)-acetyldihydrolipoyl]-L-lysyl-[protein] + CO2. The pyruvate dehydrogenase complex catalyzes the overall conversion of pyruvate to acetyl-CoA and CO(2). It contains multiple copies of three enzymatic components: pyruvate dehydrogenase (E1), dihydrolipoamide acetyltransferase (E2) and lipoamide dehydrogenase (E3). The protein is Pyruvate dehydrogenase E1 component subunit beta (pdhB) of Staurastrum punctulatum (Green alga).